We begin with the raw amino-acid sequence, 255 residues long: tRNA pseudouridine synthase A (255 aa).

The Nucleophile role is filled by Asp-52. Tyr-111 is a binding site for substrate.

The protein belongs to the tRNA pseudouridine synthase TruA family. As to quaternary structure, homodimer.

It catalyses the reaction uridine(38/39/40) in tRNA = pseudouridine(38/39/40) in tRNA. Formation of pseudouridine at positions 38, 39 and 40 in the anticodon stem and loop of transfer RNAs. This chain is tRNA pseudouridine synthase A, found in Cereibacter sphaeroides (strain ATCC 17029 / ATH 2.4.9) (Rhodobacter sphaeroides).